The following is a 339-amino-acid chain: tRNA N6-adenosine threonylcarbamoyltransferase (339 aa).

2 residues coordinate Fe cation: H111 and H115. Residues V134–G138, D167, G180, and N279 contribute to the substrate site. Residue D307 coordinates Fe cation.

Belongs to the KAE1 / TsaD family. The cofactor is Fe(2+).

Its subcellular location is the cytoplasm. The enzyme catalyses L-threonylcarbamoyladenylate + adenosine(37) in tRNA = N(6)-L-threonylcarbamoyladenosine(37) in tRNA + AMP + H(+). Its function is as follows. Required for the formation of a threonylcarbamoyl group on adenosine at position 37 (t(6)A37) in tRNAs that read codons beginning with adenine. Is involved in the transfer of the threonylcarbamoyl moiety of threonylcarbamoyl-AMP (TC-AMP) to the N6 group of A37, together with TsaE and TsaB. TsaD likely plays a direct catalytic role in this reaction. In Syntrophobacter fumaroxidans (strain DSM 10017 / MPOB), this protein is tRNA N6-adenosine threonylcarbamoyltransferase.